The following is a 241-amino-acid chain: Uridylate kinase (241 aa).

14–17 contacts ATP; that stretch reads KLSG. The segment at 22-27 is involved in allosteric activation by GTP; sequence GNQGFG. Glycine 56 contacts UMP. ATP contacts are provided by glycine 57 and arginine 61. Residues aspartate 76 and 137 to 144 contribute to the UMP site; that span reads TGNPYFTT. ATP contacts are provided by threonine 164, tyrosine 170, and aspartate 173.

The protein belongs to the UMP kinase family. As to quaternary structure, homohexamer.

The protein resides in the cytoplasm. The enzyme catalyses UMP + ATP = UDP + ADP. Its pathway is pyrimidine metabolism; CTP biosynthesis via de novo pathway; UDP from UMP (UMPK route): step 1/1. With respect to regulation, allosterically activated by GTP. Inhibited by UTP. Its function is as follows. Catalyzes the reversible phosphorylation of UMP to UDP. This Syntrophotalea carbinolica (strain DSM 2380 / NBRC 103641 / GraBd1) (Pelobacter carbinolicus) protein is Uridylate kinase.